The chain runs to 735 residues: DNA ligase 1 (735 aa).

Residues 1–11 are compositionally biased toward basic and acidic residues; that stretch reads MAGDKQGDKQA. Residues 1–23 form a disordered region; it reads MAGDKQGDKQAETTSVPAEARER. NAD(+) contacts are provided by residues 48–52, 97–98, and glutamate 128; these read DAEFD and SL. The N6-AMP-lysine intermediate role is filled by lysine 130. Residues arginine 151, glutamate 188, lysine 305, and lysine 329 each coordinate NAD(+). 4 residues coordinate Zn(2+): cysteine 423, cysteine 426, cysteine 442, and cysteine 448. Residues 643–732 form the BRCT domain; the sequence is EGPRPLEGLT…PEAAADVALS (90 aa).

It belongs to the NAD-dependent DNA ligase family. LigA subfamily. Mg(2+) is required as a cofactor. The cofactor is Mn(2+).

The enzyme catalyses NAD(+) + (deoxyribonucleotide)n-3'-hydroxyl + 5'-phospho-(deoxyribonucleotide)m = (deoxyribonucleotide)n+m + AMP + beta-nicotinamide D-nucleotide.. Its function is as follows. DNA ligase that catalyzes the formation of phosphodiester linkages between 5'-phosphoryl and 3'-hydroxyl groups in double-stranded DNA using NAD as a coenzyme and as the energy source for the reaction. It is essential for DNA replication and repair of damaged DNA. This chain is DNA ligase 1, found in Streptomyces coelicolor (strain ATCC BAA-471 / A3(2) / M145).